Consider the following 339-residue polypeptide: Transaldolase (339 aa).

Residue K135 is the Schiff-base intermediate with substrate of the active site.

The protein belongs to the transaldolase family. Type 1 subfamily. Homodimer.

The protein localises to the cytoplasm. It carries out the reaction D-sedoheptulose 7-phosphate + D-glyceraldehyde 3-phosphate = D-erythrose 4-phosphate + beta-D-fructose 6-phosphate. It functions in the pathway carbohydrate degradation; pentose phosphate pathway; D-glyceraldehyde 3-phosphate and beta-D-fructose 6-phosphate from D-ribose 5-phosphate and D-xylulose 5-phosphate (non-oxidative stage): step 2/3. Transaldolase is important for the balance of metabolites in the pentose-phosphate pathway. The protein is Transaldolase of Prochlorococcus marinus (strain MIT 9211).